The chain runs to 106 residues: Molt-inhibiting hormone (106 aa).

Residues 1 to 29 (MVNQVAQCFTVRRVWLVVVVGLLVHQTTA) form the signal peptide. Disulfide bonds link Cys36/Cys73, Cys53/Cys69, and Cys56/Cys82. The residue at position 104 (Ala104) is an Alanine amide. Residues 105–106 (GR) constitute a propeptide that is removed on maturation.

In terms of tissue distribution, sinus gland of the eyestalk.

The protein localises to the secreted. In terms of biological role, inhibits Y-organs where molting hormone (ecdysteroid) is secreted. A molting cycle is initiated when MIH secretion diminishes or stops. This chain is Molt-inhibiting hormone, found in Faxonius limosus (Spinycheek crayfish).